Reading from the N-terminus, the 766-residue chain is Darlin (766 aa).

ARM repeat units follow at residues 82–119, 167–208, 423–464, and 465–537; these read QLFE…NLTY, DFIQ…NLVD, EPNC…NLTL, and PTIN…ASMD. Residues 561–585 are disordered; it reads EEKEKTIEKTDEKTDEKTNEKKQSK. The stretch at 610–649 is one ARM 5 repeat; sequence HQEKMKQLIEESVEPFFSLLQSPFPILQVEGAKGLVLLIK.

It belongs to the RAP1GDS1 family. In terms of assembly, binds to small GTPases racE, racC but not rab21. Binds preferentially to GDP-bound racE.

In terms of biological role, part of a signaling pathway that initiates the aggregation and leads to the formation of aggregation centers or streams. Not essential for cytokinesis, pinocytosis or phagocytosis. Not essential for development, except in starvation-induced aggregation. The chain is Darlin (darA) from Dictyostelium discoideum (Social amoeba).